A 141-amino-acid polypeptide reads, in one-letter code: MAIERTLSIIKPDAVAKNVIGQIYARFEAAGLKIVAAKMVHLSRGEAEQFYAVHKERPFFKDLVDFMVSGPVMIQALEGENAIAKNRDLMGATDPKKAEKGTIRADFADSIDANAVHGSDAAETAAVEVAFFFPGMNVYSR.

Residues Lys11, Phe59, Arg87, Thr93, Arg104, and Asn114 each contribute to the ATP site. His117 (pros-phosphohistidine intermediate) is an active-site residue.

It belongs to the NDK family. In terms of assembly, homotetramer. Requires Mg(2+) as cofactor.

It is found in the cytoplasm. The enzyme catalyses a 2'-deoxyribonucleoside 5'-diphosphate + ATP = a 2'-deoxyribonucleoside 5'-triphosphate + ADP. It catalyses the reaction a ribonucleoside 5'-diphosphate + ATP = a ribonucleoside 5'-triphosphate + ADP. Major role in the synthesis of nucleoside triphosphates other than ATP. The ATP gamma phosphate is transferred to the NDP beta phosphate via a ping-pong mechanism, using a phosphorylated active-site intermediate. In Cupriavidus taiwanensis (strain DSM 17343 / BCRC 17206 / CCUG 44338 / CIP 107171 / LMG 19424 / R1) (Ralstonia taiwanensis (strain LMG 19424)), this protein is Nucleoside diphosphate kinase.